The chain runs to 142 residues: Nucleoside diphosphate kinase (142 aa).

ATP contacts are provided by Lys-11, Phe-59, Arg-87, Thr-93, Arg-104, and Asn-114. The Pros-phosphohistidine intermediate role is filled by His-117.

This sequence belongs to the NDK family. As to quaternary structure, homotetramer. It depends on Mg(2+) as a cofactor.

The protein resides in the cytoplasm. It catalyses the reaction a 2'-deoxyribonucleoside 5'-diphosphate + ATP = a 2'-deoxyribonucleoside 5'-triphosphate + ADP. The enzyme catalyses a ribonucleoside 5'-diphosphate + ATP = a ribonucleoside 5'-triphosphate + ADP. In terms of biological role, major role in the synthesis of nucleoside triphosphates other than ATP. The ATP gamma phosphate is transferred to the NDP beta phosphate via a ping-pong mechanism, using a phosphorylated active-site intermediate. This chain is Nucleoside diphosphate kinase, found in Yersinia pseudotuberculosis serotype O:1b (strain IP 31758).